Reading from the N-terminus, the 101-residue chain is MKIIRKNKKDKERREIYKQAEKMKNMYKMLRRNELLDQETRNYFNMKVTSSEKNSSISRIKNRCVETGRSRGIISAYRISRLRFREYMKMGLISGVKKISY.

The protein belongs to the universal ribosomal protein uS14 family. In terms of assembly, component of the mitochondrial ribosome small subunit (28S) which comprises a 12S rRNA and about 30 distinct proteins. Interacts with LIAT1.

It is found in the mitochondrion. This Dictyostelium discoideum (Social amoeba) protein is Small ribosomal subunit protein uS14m (mrps14).